The chain runs to 167 residues: RNA pyrophosphohydrolase (167 aa).

The Nudix hydrolase domain occupies 7-160; the sequence is PYRPCVGVMV…KRRAYEEVVA (154 aa). The Nudix box motif lies at 48-69; that stretch reads GGIDEGEDPLEAACRELYEETG.

This sequence belongs to the Nudix hydrolase family. RppH subfamily. Requires a divalent metal cation as cofactor.

In terms of biological role, accelerates the degradation of transcripts by removing pyrophosphate from the 5'-end of triphosphorylated RNA, leading to a more labile monophosphorylated state that can stimulate subsequent ribonuclease cleavage. The chain is RNA pyrophosphohydrolase from Rhizobium meliloti (strain 1021) (Ensifer meliloti).